Reading from the N-terminus, the 418-residue chain is Phosphoglycerate kinase (418 aa).

(2R)-3-phosphoglycerate contacts are provided by valine 23, aspartate 24, phenylalanine 25, asparagine 26, glutamine 39, arginine 40, serine 63, histidine 64, glycine 66, arginine 67, leucine 122, arginine 123, histidine 170, and arginine 171. ADP is bound at residue glycine 214. Residue glycine 214 coordinates CDP. The AMP site is built by alanine 215 and lysine 216. Alanine 215 contributes to the ATP binding site. Alanine 215 lines the Mg(2+) pocket. A CDP-binding site is contributed by aspartate 219. Aspartate 219 lines the Mg(2+) pocket. Position 220 (lysine 220) interacts with AMP. ATP is bound at residue lysine 220. Glycine 238 serves as a coordination point for ADP. Glycine 238 serves as a coordination point for CDP. Residues glycine 239 and glycine 313 each coordinate AMP. ATP-binding residues include glycine 239 and glycine 313. 3 residues coordinate CDP: glycine 338, alanine 340, and phenylalanine 343. Phenylalanine 343 is a binding site for ADP. Residue glutamate 344 coordinates AMP. 3 residues coordinate ATP: glutamate 344, aspartate 375, and threonine 376. Aspartate 375 provides a ligand contact to Mg(2+).

It belongs to the phosphoglycerate kinase family. As to quaternary structure, monomer. Mg(2+) serves as cofactor.

The protein localises to the cytoplasm. The protein resides in the mitochondrion. The enzyme catalyses (2R)-3-phosphoglycerate + ATP = (2R)-3-phospho-glyceroyl phosphate + ADP. It functions in the pathway carbohydrate degradation; glycolysis; pyruvate from D-glyceraldehyde 3-phosphate: step 2/5. Catalyzes one of the two ATP producing reactions in the glycolytic pathway via the reversible conversion of 1,3-diphosphoglycerate to 3-phosphoglycerate. Both L- and D- forms of purine and pyrimidine nucleotides can be used as substrates, but the activity is much lower on pyrimidines. Negatively regulates the biosynthesis of acetyl-CoA from pyruvate in the mitochondrion. In Neurospora crassa (strain ATCC 24698 / 74-OR23-1A / CBS 708.71 / DSM 1257 / FGSC 987), this protein is Phosphoglycerate kinase (pgk-1).